The chain runs to 505 residues: Sodium/sialic acid symporter NanT (505 aa).

Helical transmembrane passes span 9 to 29 (LNYIALFAYLGAIMAVGVYFA), 45 to 65 (IPGWAAGFSVFATTLSSITFM), 80 to 100 (IGQYVAIAILPIVFWFYIPFF), 128 to 148 (FMLFHIGRIAIVTYLTALALM), and 155 to 175 (PLMIVFLIGVLCIIYTFLGGI). A56 provides a ligand contact to Na(+). Position 58 (T58) interacts with N-acetyl-alpha-neuraminate. A Na(+)-binding site is contributed by L59. S60, T63, Q82, and R135 together coordinate N-acetyl-alpha-neuraminate. D182 lines the Na(+) pocket. 4 helical membrane-spanning segments follow: residues 183 to 203 (VIQGVMLSVAAILIFVVICFN), 227 to 247 (FSWSWTDSTIPVLMIGFFFAS), 280 to 300 (LVACVPIFFFAVGSALFAYYT), and 318 to 338 (FYVISQMPVGVAGLIIAAIFA). Na(+)-binding residues include A339, S342, S343, S345, and S346. Transmembrane regions (helical) follow at residues 378 to 398 (TLTVVAGLLGVVASTYLIMSN), 406 to 426 (FNSLLGLMGGPMTGLFMLGIF), 435 to 455 (ALLGVVASIATVLWVRSATDL), and 457 to 477 (FFFYGVIGTLMVVIVGYLTAP).

This sequence belongs to the sodium:solute symporter (SSF) (TC 2.A.21) family.

The protein localises to the cell inner membrane. It catalyses the reaction N-acetyl-alpha-neuraminate(out) + 2 Na(+)(out) = N-acetyl-alpha-neuraminate(in) + 2 Na(+)(in). Symporter that uses the Na(+) gradient as the driving force for the uptake of the sialic acid N-acetylneuraminic acid (Neu5Ac). Might play a role in persistence after colonization. The polypeptide is Sodium/sialic acid symporter NanT (Aliivibrio fischeri (strain ATCC 700601 / ES114) (Vibrio fischeri)).